The chain runs to 490 residues: Cytochrome P450 2C14 (490 aa).

C435 lines the heme pocket.

Belongs to the cytochrome P450 family. Heme serves as cofactor.

Its subcellular location is the endoplasmic reticulum membrane. The protein localises to the microsome membrane. It catalyses the reaction an organic molecule + reduced [NADPH--hemoprotein reductase] + O2 = an alcohol + oxidized [NADPH--hemoprotein reductase] + H2O + H(+). In terms of biological role, cytochromes P450 are a group of heme-thiolate monooxygenases. In liver microsomes, this enzyme is involved in an NADPH-dependent electron transport pathway. It oxidizes a variety of structurally unrelated compounds, including steroids, fatty acids, and xenobiotics. This Oryctolagus cuniculus (Rabbit) protein is Cytochrome P450 2C14 (CYP2C14).